We begin with the raw amino-acid sequence, 516 residues long: MEFYDGDLKDIWDSDLDPESLKISPDHDMHDWLFDRDVKDPTVILNDKLISDALLNGTQPIKTEHSYSLSSDVDSLPDSPKSLQAKIEDMDDECFPAISPKTATNGRVTIDPKYLTFHVPPTHATPISRLSSNPALNTSVADLTRSSGLQSLQAHQPHHGSGSSHVVVANLEHFQLPQHLYDNDCSSSVSSLRDGSMSPDICSDIEIDESAIKDEPMSPDSSCPASPTSQASSSQHQLSLNLAHLQSEMLFEPKHCGLLLTASSNSNNSLIKSQQRQQQILGQDNLLMAKMEIKSEKQSTSNSSDKSHAHGYGIPLTPPSSLPSDDSEGNLSPEHLFAPLSPNATVSISVANPAGGESSVRVSRTAASITRSSSGSASASGSSTSSTVTTTRQPIHTPLISSQPKGSTGTLLLTEEEKRTLLAEGYPIPQKLPLTKAEEKSLKKIRRKIKNKISAQESRRKKKEYMDQLERRVEILVTENHDYKKRLEGLEETNANLLSQLHKLQALVSKHNVKKS.

A phosphoserine mark is found at Ser75, Ser79, and Ser82. 3 disordered regions span residues 213–237, 294–338, and 353–408; these read KDEPMSPDSSCPASPTSQASSSQHQ, KSEK…HLFA, and PAGG…KGST. Over residues 221–237 the composition is skewed to low complexity; sequence SSCPASPTSQASSSQHQ. Over residues 361-392 the composition is skewed to low complexity; it reads RVSRTAASITRSSSGSASASGSSTSSTVTTTR. Residues 441–504 enclose the bZIP domain; that stretch reads SLKKIRRKIK…ANLLSQLHKL (64 aa). The segment at 443–463 is basic motif; that stretch reads KKIRRKIKNKISAQESRRKKK. Positions 469–476 are leucine-zipper; it reads LERRVEIL.

This sequence belongs to the bZIP family. May bind DNA as heterodimers with other bZIP proteins. As to expression, in all cell types examined, including developing salivary gland in embryos and in adults, brain and optic lobe cell bodies, salivary gland, midgut epithelial cells of the cardia, female ovarian columnar follicle cells and male seminal vesicle, ejaculatory duct, and ejaculatory bulb.

It localises to the nucleus. Functionally, transcriptional activator. Binds to fat body-specific enhancers of alcohol dehydrogenase (ADH) and yolk protein genes. BBF-2 may play a role in fat body gene expression. It binds the consensus sequence 5'-T[AC]NACGTAN[TG]C-3'. The protein is Cyclic AMP response element-binding protein A (CrebA) of Drosophila melanogaster (Fruit fly).